The primary structure comprises 731 residues: MSDLKCPFSGHTGAVTPAGNTNNGDWWPNQINLGILHQHHPASNPLGDAFDYPTAFASLDYSALKADLQTLMTDSQDWWPADWGHYGALFIRLAWHSAGTYRTGDGRGGAGHGNQRFAPLNSWPDNTNLDKARRLLWPIKRKYGNAISWADLIILSGNVALESMGFRTFGFAGGREDIWQPEEDVFWGKETGWLKDERRNDKGELNQPLAAVEMGLIYVNPEGPHGEPDPVASGRDVRETFARMGMTVEETVALVAGGHTFGKCHGAAPDSHLEAEPEGAALHEQGLGWRNTYESGKGEHTITSGIEGAWKPNPTRWDQGYFQMMFTYEWELTKSPAGAWQWTAKDVKPEHMIPDAHVAGKSSAPIMTTADLSLRHDAIMEPVARRFHLDQEAFADAFARAWFKLTHRDLGPRALYLGPDVPEEVQIWQDPVPPVTHPLIDEAEISTLKQQILASGQSVSALVAAAWGSASTFRGSDRRGGANGGRIRLLPQRTWEVNDPEQLNGVLTALETIQSQFNSSSSNGKSVSIADLIVLGGCAAVEKAAADGGHTVVVPFRPGRSDAGPEQTDTASFNVLKPLADGFRNWQRSGLPLRAEELLVDRAQLLTLSAPEMTVLLAGLRVMGANTAGNRQGVFTQNVGVLSNDFCVNLLDMTTRWTPTSEAQDAYIGRDSATGAERWSASRADLVFGSNSQLRAIVEVYAQNDGGSRFVADFVKAWVKVMELDRFDLRS.

Residues 1–23 form a disordered region; the sequence is MSDLKCPFSGHTGAVTPAGNTNN. Residues 95-218 constitute a cross-link (tryptophyl-tyrosyl-methioninium (Trp-Tyr) (with M-244)); it reads WHSAGTYRTG…LAAVEMGLIY (124 aa). His96 (proton acceptor) is an active-site residue. Residues 218-244 constitute a cross-link (tryptophyl-tyrosyl-methioninium (Tyr-Met) (with W-95)); sequence YVNPEGPHGEPDPVASGRDVRETFARM. His259 contacts heme b.

The protein belongs to the peroxidase family. Peroxidase/catalase subfamily. Homodimer or homotetramer. The cofactor is heme b. In terms of processing, formation of the three residue Trp-Tyr-Met cross-link is important for the catalase, but not the peroxidase activity of the enzyme.

It catalyses the reaction H2O2 + AH2 = A + 2 H2O. The enzyme catalyses 2 H2O2 = O2 + 2 H2O. Its function is as follows. Bifunctional enzyme with both catalase and broad-spectrum peroxidase activity. This Synechococcus sp. (strain WH7803) protein is Catalase-peroxidase.